The chain runs to 518 residues: DNA-binding protein Ikaros (518 aa).

The disordered stretch occupies residues 1–51; sequence METDEAQDMSQVSGKESPPISDVPDDADEPMPVPEDLSTTTGGQQSVKNER. Over residues 37–47 the composition is skewed to polar residues; the sequence is LSTTTGGQQSV. C2H2-type zinc fingers lie at residues 117–139, 145–167, 173–195, and 201–224; these read LKCD…NRSH, FQCN…IKLH, FKCH…LRTH, and HKCG…ERCH. The interval 381-405 is disordered; that stretch reads SVSSERDASPSNSCQDSTDTESNNE. C2H2-type zinc fingers lie at residues 461-483 and 489-513; these read YKCE…MGCH and FECN…RGEH.

The protein belongs to the Ikaros C2H2-type zinc-finger protein family. In terms of tissue distribution, expressed in embryonic hematopoietic organs such as the bursa of Fabricius, thymus and spleen. In the adult, expressed in spleen, thymus, bursa and peripheral blood leukocytes.

Its subcellular location is the nucleus. In terms of biological role, binds and activates the enhancer (delta-A element) of the CD3-delta gene. Functions in the specification and the maturation of the T-lymphocyte. Also interacts with a critical control element in the TDT (terminal deoxynucleotidyltransferase) promoter as well as with the promoters for other genes expressed during early stages of B- and T-cell development. Function is isoform-specific and is modulated by dominant-negative inactive isoforms. In Gallus gallus (Chicken), this protein is DNA-binding protein Ikaros (IKZF1).